A 91-amino-acid chain; its full sequence is Small ribosomal subunit protein bS6 (91 aa).

The protein belongs to the bacterial ribosomal protein bS6 family.

In terms of biological role, binds together with bS18 to 16S ribosomal RNA. In Leptospira interrogans serogroup Icterohaemorrhagiae serovar copenhageni (strain Fiocruz L1-130), this protein is Small ribosomal subunit protein bS6.